Consider the following 700-residue polypeptide: Elongation factor G (700 aa).

In terms of domain architecture, tr-type G spans 10–286 (NKVRNIGIMA…AVIDYLPNPL (277 aa)). GTP is bound by residues 19 to 26 (AHIDAGKT), 83 to 87 (DTPGH), and 137 to 140 (NKMD).

It belongs to the TRAFAC class translation factor GTPase superfamily. Classic translation factor GTPase family. EF-G/EF-2 subfamily.

It is found in the cytoplasm. In terms of biological role, catalyzes the GTP-dependent ribosomal translocation step during translation elongation. During this step, the ribosome changes from the pre-translocational (PRE) to the post-translocational (POST) state as the newly formed A-site-bound peptidyl-tRNA and P-site-bound deacylated tRNA move to the P and E sites, respectively. Catalyzes the coordinated movement of the two tRNA molecules, the mRNA and conformational changes in the ribosome. The polypeptide is Elongation factor G (Rhodococcus erythropolis (strain PR4 / NBRC 100887)).